A 548-amino-acid chain; its full sequence is Chaperonin GroEL (548 aa).

ATP contacts are provided by residues 30–33 (TLGP), lysine 51, 87–91 (DGTTT), glycine 415, 479–481 (NAA), and aspartate 495. The segment at 526-548 (KEDKSSDLGSAPAGGMGGMGGMM) is disordered. The segment covering 537 to 548 (PAGGMGGMGGMM) has biased composition (gly residues).

The protein belongs to the chaperonin (HSP60) family. Forms a cylinder of 14 subunits composed of two heptameric rings stacked back-to-back. Interacts with the co-chaperonin GroES.

The protein localises to the cytoplasm. It carries out the reaction ATP + H2O + a folded polypeptide = ADP + phosphate + an unfolded polypeptide.. In terms of biological role, together with its co-chaperonin GroES, plays an essential role in assisting protein folding. The GroEL-GroES system forms a nano-cage that allows encapsulation of the non-native substrate proteins and provides a physical environment optimized to promote and accelerate protein folding. The chain is Chaperonin GroEL from Buchnera aphidicola subsp. Pterocomma populeum.